Consider the following 629-residue polypeptide: Proteoglycan Cow (629 aa).

The first 27 residues, 1-27, serve as a signal peptide directing secretion; sequence MKHSPLIASACLALVLMSSSLIGSTEA. Disordered stretches follow at residues 118–186 and 198–223; these read KRRV…ESKE and GDKQ…DDDE. Positions 128–143 are enriched in acidic residues; the sequence is DSQDAEDINNDDEDNS. Asn-142 is a glycosylation site (N-linked (GlcNAc...) asparagine). The span at 144–159 shows a compositional bias: low complexity; that stretch reads SDGGSSNSSPTGTNNA. Over residues 167–186 the composition is skewed to acidic residues; sequence EETDDEDKSLSLGDDDESKE. The region spanning 222–273 is the Kazal-like domain; sequence DEELDNCKPCPVAKPTFLCGADNRTYSSLCRLDYHNCIHSTSIRIACKGFCP. 3 disulfides stabilise this stretch: Cys-228–Cys-258, Cys-231–Cys-251, and Cys-240–Cys-272. Asn-244 carries N-linked (GlcNAc...) asparagine glycosylation. The interval 298-356 is disordered; sequence SLDQQQQQQQQQQQQQQQQQAYKDSNNNNIMMNSGNIMGGNNNDFNTIMNDKEDNNRHN. Residues 301-340 are compositionally biased toward low complexity; sequence QQQQQQQQQQQQQQQQQAYKDSNNNNIMMNSGNIMGGNNN. 2 consecutive EF-hand domains span residues 468 to 503 and 508 to 535; these read ACKT…QNER and FIDT…TDRP. Residues Asp-481, Asn-483, Asp-485, Gln-487, and Glu-492 each contribute to the Ca(2+) site. A Thyroglobulin type-1 domain is found at 533–594; it reads DRPCAAVRRR…NTRTRGKPNC (62 aa). Intrachain disulfides connect Cys-536/Cys-555, Cys-566/Cys-573, and Cys-575/Cys-594. Residues 602–629 are disordered; it reads ASLTSDDEDEGADDEDSAEGSADQMLVF. Over residues 606 to 619 the composition is skewed to acidic residues; that stretch reads SDDEDEGADDEDSA. The span at 620–629 shows a compositional bias: low complexity; that stretch reads EGSADQMLVF.

Interacts (in heparan sulfate-bound form) with wg. Post-translationally, contains heparan sulfate O-linked oligosaccharides. In terms of tissue distribution, in the wing disk, detected throughout the disk where it is localized primarily to the apical surface but is also present at the basal surface (at protein level).

It is found in the secreted. In terms of biological role, binds to the Wnt signaling protein wg, stabilizes it and promotes its extracellular distribution. This is required for establishment of a wg gradient during development to allow for regulation of target genes at different levels. This is Proteoglycan Cow from Drosophila melanogaster (Fruit fly).